The primary structure comprises 207 residues: Large ribosomal subunit protein uL4 (207 aa).

A disordered region spans residues 50 to 76 (AVKNRSAVSGGGRKPWKQKGTGRARQG).

The protein belongs to the universal ribosomal protein uL4 family. Part of the 50S ribosomal subunit.

Functionally, one of the primary rRNA binding proteins, this protein initially binds near the 5'-end of the 23S rRNA. It is important during the early stages of 50S assembly. It makes multiple contacts with different domains of the 23S rRNA in the assembled 50S subunit and ribosome. In terms of biological role, forms part of the polypeptide exit tunnel. This chain is Large ribosomal subunit protein uL4, found in Staphylococcus aureus (strain JH9).